Here is a 500-residue protein sequence, read N- to C-terminus: NAD(P)H-quinone oxidoreductase chain 4, chloroplastic (500 aa).

14 helical membrane passes run 4 to 24 (FPWL…IFFL), 37 to 57 (IFIC…HFQL), 87 to 107 (IGPI…AWPV), 113 to 130 (LFHF…GSFS), 134 to 154 (LLLF…LLSM), 167 to 187 (FILY…GIGL), 208 to 228 (ALEI…SPII), 242 to 262 (HYST…YGLV), 272 to 292 (AHSI…IYAA), 305 to 325 (IAYS…SITD), 330 to 350 (GAIL…FLAG), 386 to 406 (LALP…GIIT), 416 to 436 (ILIT…SLSM), and 462 to 482 (LFVL…PDFV).

This sequence belongs to the complex I subunit 4 family.

The protein localises to the plastid. It localises to the chloroplast thylakoid membrane. It carries out the reaction a plastoquinone + NADH + (n+1) H(+)(in) = a plastoquinol + NAD(+) + n H(+)(out). It catalyses the reaction a plastoquinone + NADPH + (n+1) H(+)(in) = a plastoquinol + NADP(+) + n H(+)(out). The protein is NAD(P)H-quinone oxidoreductase chain 4, chloroplastic of Vitis vinifera (Grape).